A 351-amino-acid chain; its full sequence is Tropomodulin-2 (351 aa).

Ser25 bears the Phosphoserine mark.

The protein belongs to the tropomodulin family. Binds to the N-terminus of tropomyosin and to actin. In terms of tissue distribution, neuronal-tissue specific.

The protein resides in the cytoplasm. The protein localises to the cytoskeleton. Its function is as follows. Blocks the elongation and depolymerization of the actin filaments at the pointed end. The Tmod/TM complex contributes to the formation of the short actin protofilament, which in turn defines the geometry of the membrane skeleton. The sequence is that of Tropomodulin-2 (Tmod2) from Mus musculus (Mouse).